A 611-amino-acid chain; its full sequence is MGRLKQKGKAGAAKNYITRTAAVRKLQCSLADFRRLCILKGIFPREPNNRKKANKGSSAPTSFYYAKDIAYLAHEPVLKRLREHKAFAKKLSRALGRGEWSAAKSLEENKPIYRLDHIIKERYPTFVDALRDIDDALCMVFLFATLPSTARLPREIIDNCARLSMQWQLYVMHTNSLRKVFLSIKGVYYQAEVMDQTITWLVPYQFTQNIPTDVDVRVMLTFLELYQTLLGFVFFKLYSDANLVYPPPLDINKDDMAAGVGAFNLQSTHVQPKRNETGKTVDVDGKKVSVKDVRQTIKSIVAADEPQVDVQMGDPDEASPGEEEQFVAHASKSAPDAVPELPTLHMLSSTPSSPSSRLFAPYTFWLSRETSRSIFEFIIRSHGGRVGWPASSGTGSPFDESDESITHVIIDRPVVQKEETPAERELRSRRKYVQPQWVVDSINAGKILLEDTYAQGKLLPPHLSPFGEYEGAYDPTAATNDADMDVETDGEEGEADASGDEKESNTDAVEAALASVAMDDPASVRAAELAAEAAGLDYNIFETKVKKASKSKKPDTASKATEEAEKDMNKMMMSNKQRKLYEKMKYSQQKKAAEKEKLEQRKKQLQKAGGK.

The interval 310 to 335 (VQMGDPDEASPGEEEQFVAHASKSAP) is disordered. Positions 314 to 325 (DPDEASPGEEEQ) are enriched in acidic residues. The BRCT domain occupies 354–455 (PSSRLFAPYT…KILLEDTYAQ (102 aa)). 2 disordered regions span residues 469–506 (YEGAYDPTAATNDADMDVETDGEEGEADASGDEKESNT) and 545–611 (VKKA…AGGK). Acidic residues predominate over residues 482 to 498 (ADMDVETDGEEGEADAS). Basic and acidic residues-rich tracts occupy residues 552-569 (KKPDTASKATEEAEKDMN) and 579-602 (KLYEKMKYSQQKKAAEKEKLEQRK). A coiled-coil region spans residues 580–609 (LYEKMKYSQQKKAAEKEKLEQRKKQLQKAG).

The protein belongs to the pescadillo family. In terms of assembly, component of the NOP7 complex, composed of ERB1, NOP7 and YTM1. The complex is held together by ERB1, which interacts with NOP7 via its N-terminal domain and with YTM1 via a high-affinity interaction between the seven-bladed beta-propeller domains of the 2 proteins. The NOP7 complex associates with the 66S pre-ribosome.

It is found in the nucleus. Its subcellular location is the nucleolus. The protein resides in the nucleoplasm. Functionally, component of the NOP7 complex, which is required for maturation of the 25S and 5.8S ribosomal RNAs and formation of the 60S ribosome. The chain is Pescadillo homolog from Coprinopsis cinerea (strain Okayama-7 / 130 / ATCC MYA-4618 / FGSC 9003) (Inky cap fungus).